The chain runs to 296 residues: Small ribosomal subunit protein uS2 (296 aa).

Residues 274-284 (ASSAAPADTWA) show a composition bias toward low complexity. Residues 274–296 (ASSAAPADTWAGESGNPDAGVKW) are disordered.

It belongs to the universal ribosomal protein uS2 family. In terms of assembly, component of the small ribosomal subunit. Mature ribosomes consist of a small (40S) and a large (60S) subunit. The 40S subunit contains about 33 different proteins and 1 molecule of RNA (18S). The 60S subunit contains about 49 different proteins and 3 molecules of RNA (25S, 5.8S and 5S). Interacts with RPS21.

The protein resides in the cytoplasm. In terms of biological role, required for the assembly and/or stability of the 40S ribosomal subunit. Required for the processing of the 20S rRNA-precursor to mature 18S rRNA in a late step of the maturation of 40S ribosomal subunits. The sequence is that of Small ribosomal subunit protein uS2 from Ajellomyces capsulatus (strain G186AR / H82 / ATCC MYA-2454 / RMSCC 2432) (Darling's disease fungus).